The primary structure comprises 72 residues: Probable transcription factor elt-4 (72 aa).

The segment at 16–40 (CSNCNGTNTTLWRRKAEGDPVCNAC) adopts a GATA-type zinc-finger fold.

It localises to the nucleus. Probable transcription factor. Plays a role in regulating heme-dependent expression of heme transporter hrg-1. Modulates lifespan in a daf-16-dependent manner. This Caenorhabditis elegans protein is Probable transcription factor elt-4.